The chain runs to 277 residues: NAD kinase (277 aa).

Aspartate 67 acts as the Proton acceptor in catalysis. NAD(+) contacts are provided by residues 67-68 (DG), arginine 72, 137-138 (NE), lysine 148, arginine 165, aspartate 167, 178-183 (TGYAMS), leucine 202, and glutamine 236.

Belongs to the NAD kinase family. It depends on a divalent metal cation as a cofactor.

It localises to the cytoplasm. It catalyses the reaction NAD(+) + ATP = ADP + NADP(+) + H(+). In terms of biological role, involved in the regulation of the intracellular balance of NAD and NADP, and is a key enzyme in the biosynthesis of NADP. Catalyzes specifically the phosphorylation on 2'-hydroxyl of the adenosine moiety of NAD to yield NADP. This chain is NAD kinase, found in Pyrococcus furiosus (strain ATCC 43587 / DSM 3638 / JCM 8422 / Vc1).